Reading from the N-terminus, the 425-residue chain is Multifunctional CCA protein (425 aa).

ATP contacts are provided by glycine 8 and arginine 11. 2 residues coordinate CTP: glycine 8 and arginine 11. Mg(2+) contacts are provided by aspartate 21 and aspartate 23. The ATP site is built by arginine 91, arginine 141, and arginine 144. CTP is bound by residues arginine 91, arginine 141, and arginine 144. The HD domain occupies 230–331; sequence TGVHLMMVLD…VRLLERCDAI (102 aa).

It belongs to the tRNA nucleotidyltransferase/poly(A) polymerase family. Bacterial CCA-adding enzyme type 1 subfamily. Monomer. Can also form homodimers and oligomers. Mg(2+) is required as a cofactor. It depends on Ni(2+) as a cofactor.

It catalyses the reaction a tRNA precursor + 2 CTP + ATP = a tRNA with a 3' CCA end + 3 diphosphate. It carries out the reaction a tRNA with a 3' CCA end + 2 CTP + ATP = a tRNA with a 3' CCACCA end + 3 diphosphate. Its function is as follows. Catalyzes the addition and repair of the essential 3'-terminal CCA sequence in tRNAs without using a nucleic acid template. Adds these three nucleotides in the order of C, C, and A to the tRNA nucleotide-73, using CTP and ATP as substrates and producing inorganic pyrophosphate. tRNA 3'-terminal CCA addition is required both for tRNA processing and repair. Also involved in tRNA surveillance by mediating tandem CCA addition to generate a CCACCA at the 3' terminus of unstable tRNAs. While stable tRNAs receive only 3'-terminal CCA, unstable tRNAs are marked with CCACCA and rapidly degraded. In Acidovorax ebreus (strain TPSY) (Diaphorobacter sp. (strain TPSY)), this protein is Multifunctional CCA protein.